We begin with the raw amino-acid sequence, 503 residues long: ATP synthase subunit alpha (503 aa).

ATP is bound at residue 170-177; that stretch reads GDRQTGKT.

It belongs to the ATPase alpha/beta chains family. In terms of assembly, F-type ATPases have 2 components, CF(1) - the catalytic core - and CF(0) - the membrane proton channel. CF(1) has five subunits: alpha(3), beta(3), gamma(1), delta(1), epsilon(1). CF(0) has three main subunits: a(1), b(2) and c(9-12). The alpha and beta chains form an alternating ring which encloses part of the gamma chain. CF(1) is attached to CF(0) by a central stalk formed by the gamma and epsilon chains, while a peripheral stalk is formed by the delta and b chains.

The protein resides in the cell inner membrane. It carries out the reaction ATP + H2O + 4 H(+)(in) = ADP + phosphate + 5 H(+)(out). Produces ATP from ADP in the presence of a proton gradient across the membrane. The alpha chain is a regulatory subunit. In Pseudothermotoga lettingae (strain ATCC BAA-301 / DSM 14385 / NBRC 107922 / TMO) (Thermotoga lettingae), this protein is ATP synthase subunit alpha.